Reading from the N-terminus, the 406-residue chain is 3-oxoacyl-[acyl-carrier-protein] synthase 1 (406 aa).

A Ketosynthase family 3 (KS3) domain is found at 1-405; the sequence is MRRVVITGIG…GTNVSLIVKK (405 aa). Active-site for beta-ketoacyl synthase activity residues include Cys164, His299, and His335.

It belongs to the thiolase-like superfamily. Beta-ketoacyl-ACP synthases family. As to quaternary structure, homodimer.

It localises to the cytoplasm. The enzyme catalyses a fatty acyl-[ACP] + malonyl-[ACP] + H(+) = a 3-oxoacyl-[ACP] + holo-[ACP] + CO2. The catalysed reaction is (3Z)-decenoyl-[ACP] + malonyl-[ACP] + H(+) = 3-oxo-(5Z)-dodecenoyl-[ACP] + holo-[ACP] + CO2. The protein operates within lipid metabolism; fatty acid biosynthesis. Its function is as follows. Involved in the type II fatty acid elongation cycle. Catalyzes the elongation of a wide range of acyl-ACP by the addition of two carbons from malonyl-ACP to an acyl acceptor. Can also use unsaturated fatty acids. Catalyzes a key reaction in unsaturated fatty acid (UFA) synthesis, the elongation of the cis-3-decenoyl-ACP produced by FabA. The sequence is that of 3-oxoacyl-[acyl-carrier-protein] synthase 1 (fabB) from Buchnera aphidicola subsp. Acyrthosiphon pisum (strain APS) (Acyrthosiphon pisum symbiotic bacterium).